We begin with the raw amino-acid sequence, 89 residues long: Putative regulatory protein CLL_A1210 (89 aa).

It belongs to the RemA family.

The sequence is that of Putative regulatory protein CLL_A1210 from Clostridium botulinum (strain Eklund 17B / Type B).